Consider the following 79-residue polypeptide: MSRTCQITRKKPMNGNKRSHAMNATKRWFIPNIHSHRFWIENKKKFIKLRISTKGIRLVDKLGIEQFLSIVSFKNKKNY.

This sequence belongs to the bacterial ribosomal protein bL28 family.

In Blochmanniella floridana, this protein is Large ribosomal subunit protein bL28.